The following is a 180-amino-acid chain: Stathmin-3 (180 aa).

2 S-palmitoyl cysteine lipidation sites follow: Cys-22 and Cys-24. The SLD domain occupies 38 to 180 (GDMEVKQLDK…NKEQREEMSG (143 aa)). Ser-50, Ser-60, Ser-65, Ser-68, Ser-72, Ser-73, and Ser-81 each carry phosphoserine. The disordered stretch occupies residues 58 to 81 (LKSPSDLSPESPVLSSPPKRKDAS). The span at 60–74 (SPSDLSPESPVLSSP) shows a compositional bias: low complexity. Positions 75–179 (PKRKDASLEE…RNKEQREEMS (105 aa)) form a coiled coil.

This sequence belongs to the stathmin family. Interacts with STAT3. Interacts with CLU (secreted form); this interaction may act as an important modulator during neuronal differentiation. Post-translationally, N-terminal palmitoylation promotes specific anchoring to the cytosolic leaflet of Golgi membranes and subsequent vesicular trafficking along dendrites and axons. Neuronal Stathmins are substrates for palmitoyltransferases ZDHHC3, ZDHHC7 and ZDHHC15. As to expression, neuron specific.

The protein resides in the golgi apparatus. The protein localises to the cell projection. It is found in the growth cone. Its subcellular location is the axon. It localises to the cytoplasm. The protein resides in the cytosol. Exhibits microtubule-destabilizing activity, which is antagonized by STAT3. The sequence is that of Stathmin-3 (Stmn3) from Rattus norvegicus (Rat).